Reading from the N-terminus, the 184-residue chain is ESX-1 secretion-associated protein EspD (184 aa).

The segment at 33-56 is disordered; the sequence is IGVGSAATPDTGPDLDNAHGQAET.

The protein localises to the secreted. Required for ESX-1 function. Required for the maintenance of adequate cellular levels of both EspA and EspC. Facilitates EsxA secretion. This is ESX-1 secretion-associated protein EspD from Mycobacterium tuberculosis (strain CDC 1551 / Oshkosh).